Reading from the N-terminus, the 408-residue chain is LL-diaminopimelate aminotransferase (408 aa).

Substrate-binding residues include Tyr-15 and Gly-42. Pyridoxal 5'-phosphate-binding positions include Tyr-72, 108–109, Tyr-132, Asn-187, Tyr-218, and 246–248; these read SK and SFS. Lys-109, Tyr-132, and Asn-187 together coordinate substrate. An N6-(pyridoxal phosphate)lysine modification is found at Lys-249. Residues Arg-257 and Asn-292 each contribute to the pyridoxal 5'-phosphate site. The substrate site is built by Asn-292 and Arg-388.

Belongs to the class-I pyridoxal-phosphate-dependent aminotransferase family. LL-diaminopimelate aminotransferase subfamily. In terms of assembly, homodimer. Pyridoxal 5'-phosphate serves as cofactor.

The catalysed reaction is (2S,6S)-2,6-diaminopimelate + 2-oxoglutarate = (S)-2,3,4,5-tetrahydrodipicolinate + L-glutamate + H2O + H(+). Its pathway is amino-acid biosynthesis; L-lysine biosynthesis via DAP pathway; LL-2,6-diaminopimelate from (S)-tetrahydrodipicolinate (aminotransferase route): step 1/1. In terms of biological role, involved in the synthesis of meso-diaminopimelate (m-DAP or DL-DAP), required for both lysine and peptidoglycan biosynthesis. Catalyzes the direct conversion of tetrahydrodipicolinate to LL-diaminopimelate. The chain is LL-diaminopimelate aminotransferase from Parasynechococcus marenigrum (strain WH8102).